Reading from the N-terminus, the 316-residue chain is Bifunctional peptidase and (3S)-lysyl hydroxylase JMJD7 (316 aa).

Residue Cys-19 is modified to Cysteine sulfenic acid (-SOH). 2-oxoglutarate-binding residues include Tyr-123 and Thr-172. Tyr-123 serves as a coordination point for succinate. Positions 124 to 310 (IQKQNSNLSV…YCYYRMLEQM (187 aa)) constitute a JmjC domain. Fe cation-binding residues include His-175 and Asp-177. 2-oxoglutarate contacts are provided by Asn-181, Tyr-183, and Lys-190. 2 residues coordinate succinate: Tyr-183 and Lys-190. His-278 contributes to the Fe cation binding site. Residue Trp-292 coordinates 2-oxoglutarate.

Homodimer; disulfide-linked. Fe(2+) is required as a cofactor. Expressed in the pars intercerebralis and fan-shaped body, regions known to be involved in sleep.

The protein localises to the nucleus. It is found in the cytoplasm. It catalyses the reaction L-lysyl-[protein] + 2-oxoglutarate + O2 = (3S)-3-hydroxy-L-lysyl-[protein] + succinate + CO2. Its function is as follows. Bifunctional enzyme that acts both as an endopeptidase and 2-oxoglutarate-dependent monooxygenase. Endopeptidase that cleaves histones N-terminal tails at the carboxyl side of methylated arginine or lysine residues, to generate 'tailless nucleosomes', which may trigger transcription elongation. Hydroxylates the guanylate binding protein 128up. May be involved in regulation of behavior and circadian rhythms. This Drosophila melanogaster (Fruit fly) protein is Bifunctional peptidase and (3S)-lysyl hydroxylase JMJD7.